The sequence spans 367 residues: MVMEVGILDAGGLRALLRERAAQCLLLDCRSFFAFNAGHIVGSVNVRFSTIVRRRAKGAMGLEHIVPNTELRGRLLAGAYHAVVLLDERSAALDGAKRDGTLALAAGALCREARSTQVFFLQGGYEAFSASCPELCSKQSTPMGLSLPLSTSVPDSAESGCSSCSTPLYDQGGPVEILSFLYLGSAYHASRKDMLDALGITALINVSANCPNHFEGHYQYKSIPVEDNHKADISSWFNEAIDFIDSIKDAGGRVFVHCQAGISRSATICLAYLMRTNRVKLDEAFEFVKQRRSIISPNFSFMGQLLQFESQVLAPHCSAEAGSPAMAVLDRGTSTTTVFNFPVSIPVHPTNSALNYLQSPITTSPSC.

The Rhodanese domain maps to 20–137 (RAAQCLLLDC…FSASCPELCS (118 aa)). A Tyrosine-protein phosphatase domain is found at 173 to 314 (GPVEILSFLY…LLQFESQVLA (142 aa)). Cysteine 258 functions as the Phosphocysteine intermediate in the catalytic mechanism. Phosphoserine; by MAPK1 and MAPK3 occurs at positions 359 and 364.

It belongs to the protein-tyrosine phosphatase family. Non-receptor class dual specificity subfamily. In terms of processing, phosphorylation at Ser-359 and Ser-364 by MAPK1/ERK2 and MAPK3/ERK1 reduces its rate of degradation. Post-translationally, 'Lys-48'-linked polyubiquitinated by NEURL3, leading to proteasomal degradation. As to expression, brain. High level expression seen in the cingulate gyrus within the retrospinal cortex, ventral and medial divisions of the anterior thalamus and the medial geniculate nucleus. Expressed at moderate levels in the parietal and temporal cortex. Expressed in the cerebellum.

Its subcellular location is the nucleus. It catalyses the reaction O-phospho-L-tyrosyl-[protein] + H2O = L-tyrosyl-[protein] + phosphate. The catalysed reaction is O-phospho-L-seryl-[protein] + H2O = L-seryl-[protein] + phosphate. It carries out the reaction O-phospho-L-threonyl-[protein] + H2O = L-threonyl-[protein] + phosphate. Functionally, dual specificity phosphatase that dephosphorylates MAP kinase MAPK1/ERK2 on both 'Thr-183' and 'Tyr-185', regulating its activity during the meiotic cell cycle. This chain is Dual specificity protein phosphatase 1, found in Rattus norvegicus (Rat).